A 45-amino-acid chain; its full sequence is Small polypeptide DEVIL 23 (45 aa).

The segment at 13-44 (KSTLRCWDWCKEQRTRAYIIWRCLIFLLRWDD) is required for DVL/RTFL small polypeptide activity. Residues 22–39 (CKEQRTRAYIIWRCLIFL) traverse the membrane as a helical segment.

Belongs to the DVL/RTFL small polypeptides family.

It localises to the cell membrane. Functionally, small polypeptide acting as a regulatory molecule which coordinates cellular responses required for differentiation, growth and development, probably by restricting polar cell proliferation in lateral organs and coordinating socket cell recruitment and differentiation at trichome sites. This Arabidopsis thaliana (Mouse-ear cress) protein is Small polypeptide DEVIL 23.